The following is a 369-amino-acid chain: Flagellar P-ring protein (369 aa).

An N-terminal signal peptide occupies residues 1 to 22; sequence MFNVRQLIATTLLLSCAFAAQA.

The protein belongs to the FlgI family. The basal body constitutes a major portion of the flagellar organelle and consists of four rings (L,P,S, and M) mounted on a central rod.

It localises to the periplasm. The protein localises to the bacterial flagellum basal body. Assembles around the rod to form the L-ring and probably protects the motor/basal body from shearing forces during rotation. This Pseudomonas putida (strain ATCC 47054 / DSM 6125 / CFBP 8728 / NCIMB 11950 / KT2440) protein is Flagellar P-ring protein.